A 502-amino-acid polypeptide reads, in one-letter code: Adenylate cyclase (502 aa).

Residues 1–25 (MGDFCRRVDCKAMKFFALRSSIRTQ) lie on the Cytoplasmic side of the membrane. The chain crosses the membrane as a helical span at residues 26–46 (IMASTTLLILALIGAIVTVWA). Topologically, residues 47–203 (KSESTLYHQE…RKVNLAVTNA (157 aa)) are lumenal, thylakoid. A helical membrane pass occupies residues 204–226 (VNQALVVGFAGLNIGWICAYFLA). Residues 227 to 280 (QHLSDPVRRLQISVAKIAGGDLQHRADIHSRADEIGALATSVNEMSAALQISFN) enclose the HAMP domain. Over 227–502 (QHLSDPVRRL…EAISIYEVKA (276 aa)) the chain is Cytoplasmic. Positions 320–451 (TILFCDIRGY…DAVNVASRIE (132 aa)) constitute a Guanylate cyclase domain. Asp325 and Asp369 together coordinate Mg(2+).

This sequence belongs to the adenylyl cyclase class-3 family. The cofactor is Mg(2+).

It localises to the cellular thylakoid membrane. It catalyses the reaction ATP = 3',5'-cyclic AMP + diphosphate. May function as a membrane-localized receptor protein. The protein is Adenylate cyclase (cya) of Anabaena cylindrica.